The primary structure comprises 222 residues: uncharacterized protein (222 aa).

The helical transmembrane segment at 7-26 threads the bilayer; sequence ICLVSLICISGIYFGYQYYQ. In terms of domain architecture, SPOR spans 139-222; the sequence is CRSNAGYKVQ…AYNKQSCVLK (84 aa).

The protein localises to the membrane. This is an uncharacterized protein from Rickettsia prowazekii (strain Madrid E).